A 186-amino-acid chain; its full sequence is dTTP/UTP pyrophosphatase (186 aa).

Asp66 functions as the Proton acceptor in the catalytic mechanism.

The protein belongs to the Maf family. YhdE subfamily. The cofactor is a divalent metal cation.

It is found in the cytoplasm. It catalyses the reaction dTTP + H2O = dTMP + diphosphate + H(+). It carries out the reaction UTP + H2O = UMP + diphosphate + H(+). In terms of biological role, nucleoside triphosphate pyrophosphatase that hydrolyzes dTTP and UTP. May have a dual role in cell division arrest and in preventing the incorporation of modified nucleotides into cellular nucleic acids. This chain is dTTP/UTP pyrophosphatase, found in Pyrococcus horikoshii (strain ATCC 700860 / DSM 12428 / JCM 9974 / NBRC 100139 / OT-3).